The primary structure comprises 142 residues: Large ribosomal subunit protein uL13 (142 aa).

The protein belongs to the universal ribosomal protein uL13 family. In terms of assembly, part of the 50S ribosomal subunit.

Its function is as follows. This protein is one of the early assembly proteins of the 50S ribosomal subunit, although it is not seen to bind rRNA by itself. It is important during the early stages of 50S assembly. In Acholeplasma laidlawii (strain PG-8A), this protein is Large ribosomal subunit protein uL13.